We begin with the raw amino-acid sequence, 1058 residues long: Carbamoyl phosphate synthase large chain (1058 aa).

The carboxyphosphate synthetic domain stretch occupies residues 1-401; it reads MPKRTDIQKI…SLLKACRSLE (401 aa). Positions 129, 169, 175, 176, 208, 210, 215, 241, 242, 243, 284, and 298 each coordinate ATP. One can recognise an ATP-grasp 1 domain in the interval 133–327; the sequence is KQLMEELEQP…IAKLAAKIAV (195 aa). 3 residues coordinate Mg(2+): Gln284, Glu298, and Asn300. 3 residues coordinate Mn(2+): Gln284, Glu298, and Asn300. Positions 402–546 are oligomerization domain; it reads IGVHHNEIPE…YSTYGWENES (145 aa). The carbamoyl phosphate synthetic domain stretch occupies residues 547-929; sequence IRSDKESVLV…ALYKAFEASY (383 aa). An ATP-grasp 2 domain is found at 671-861; it reads EQALKELDIP…MAQVATKLIL (191 aa). ATP-binding residues include Arg707, Ser746, Ile748, Glu752, Gly777, Val778, His779, Ser780, Gln820, and Glu832. Residues Gln820, Glu832, and Asn834 each coordinate Mg(2+). The Mn(2+) site is built by Gln820, Glu832, and Asn834. The 129-residue stretch at 930–1058 folds into the MGS-like domain; it reads LHLPTFGNVV…ESRSFVTEAI (129 aa). The interval 930–1058 is allosteric domain; sequence LHLPTFGNVV…ESRSFVTEAI (129 aa).

It belongs to the CarB family. Composed of two chains; the small (or glutamine) chain promotes the hydrolysis of glutamine to ammonia, which is used by the large (or ammonia) chain to synthesize carbamoyl phosphate. Tetramer of heterodimers (alpha,beta)4. The cofactor is Mg(2+). Requires Mn(2+) as cofactor.

It carries out the reaction hydrogencarbonate + L-glutamine + 2 ATP + H2O = carbamoyl phosphate + L-glutamate + 2 ADP + phosphate + 2 H(+). It catalyses the reaction hydrogencarbonate + NH4(+) + 2 ATP = carbamoyl phosphate + 2 ADP + phosphate + 2 H(+). It functions in the pathway amino-acid biosynthesis; L-arginine biosynthesis; carbamoyl phosphate from bicarbonate: step 1/1. Its pathway is pyrimidine metabolism; UMP biosynthesis via de novo pathway; (S)-dihydroorotate from bicarbonate: step 1/3. In terms of biological role, large subunit of the glutamine-dependent carbamoyl phosphate synthetase (CPSase). CPSase catalyzes the formation of carbamoyl phosphate from the ammonia moiety of glutamine, carbonate, and phosphate donated by ATP, constituting the first step of 2 biosynthetic pathways, one leading to arginine and/or urea and the other to pyrimidine nucleotides. The large subunit (synthetase) binds the substrates ammonia (free or transferred from glutamine from the small subunit), hydrogencarbonate and ATP and carries out an ATP-coupled ligase reaction, activating hydrogencarbonate by forming carboxy phosphate which reacts with ammonia to form carbamoyl phosphate. This Streptococcus pneumoniae serotype 19F (strain G54) protein is Carbamoyl phosphate synthase large chain.